Here is a 420-residue protein sequence, read N- to C-terminus: Type II methyltransferase M.NmeDI (420 aa).

A disordered region spans residues 1 to 23 (MMSLKIQPAVPKKSDKPSATNRD). An SAM-dependent MTase C5-type domain is found at 56–411 (TLIFSFFSGA…MTLKSYLENH (356 aa)). The active site involves C148.

It belongs to the class I-like SAM-binding methyltransferase superfamily. C5-methyltransferase family.

It catalyses the reaction a 2'-deoxycytidine in DNA + S-adenosyl-L-methionine = a 5-methyl-2'-deoxycytidine in DNA + S-adenosyl-L-homocysteine + H(+). A methylase that recognizes the double-stranded sequence 5'-RCCGGB-3', methylates C-2 on both strands, and protects the DNA from cleavage by the NmeDI endonuclease. The polypeptide is Type II methyltransferase M.NmeDI (nmeDIMP) (Neisseria meningitidis serogroup C).